The chain runs to 80 residues: Large ribosomal subunit protein bL31B (80 aa).

The protein belongs to the bacterial ribosomal protein bL31 family. Type B subfamily. In terms of assembly, part of the 50S ribosomal subunit.

This chain is Large ribosomal subunit protein bL31B, found in Exiguobacterium sp. (strain ATCC BAA-1283 / AT1b).